Consider the following 357-residue polypeptide: Acyl-coenzyme A diphosphatase NUDT19 (357 aa).

Residues 10–242 (AATVMLAAGW…IWLAPPQFYE (233 aa)) form the Nudix hydrolase domain. Residues 97–118 (AALPDDVALRICAIRETFEEAG) carry the Nudix box motif. Residues Glu-112 and Glu-116 each coordinate Mg(2+). Lys-300 is modified (N6-succinyllysine). The Microbody targeting signal signature appears at 355 to 357 (ARL).

Belongs to the Nudix hydrolase family. As to quaternary structure, monomer. Mg(2+) serves as cofactor. Mn(2+) is required as a cofactor.

The protein resides in the peroxisome. It carries out the reaction an acyl-CoA + H2O = an acyl-4'-phosphopantetheine + adenosine 3',5'-bisphosphate + 2 H(+). The enzyme catalyses CoA + H2O = (R)-4'-phosphopantetheine + adenosine 3',5'-bisphosphate + 2 H(+). It catalyses the reaction hexanoyl-CoA + H2O = hexanoyl-4'-phosphopantetheine + adenosine 3',5'-bisphosphate + 2 H(+). The catalysed reaction is octanoyl-CoA + H2O = S-octanoyl-4'-phosphopantetheine + adenosine 3',5'-bisphosphate + 2 H(+). It carries out the reaction butanoyl-CoA + H2O = S-butanoyl-4'-phosphopantetheine + adenosine 3',5'-bisphosphate + 2 H(+). The enzyme catalyses propanoyl-CoA + H2O = propanoyl-4'-phosphopantetheine + adenosine 3',5'-bisphosphate + 2 H(+). It catalyses the reaction malonyl-CoA + H2O = malonyl-4'-phosphopantetheine + adenosine 3',5'-bisphosphate + 2 H(+). The catalysed reaction is succinyl-CoA + H2O = succinyl-4'-phosphopantetheine + adenosine 3',5'-bisphosphate + 2 H(+). It carries out the reaction choloyl-CoA + H2O = S-choloyl-4'-phosphopantetheine + adenosine 3',5'-bisphosphate + 2 H(+). The enzyme catalyses 4,8-dimethylnonanoyl-CoA + H2O = S-(4,8-dimethylnonanoyl)-4'-phosphopantetheine + adenosine 3',5'-bisphosphate + 2 H(+). It catalyses the reaction (9Z,12Z,15Z)-octadecatrienoyl-CoA + H2O = S-(9Z,12Z,15Z-octadecatrienoyl)-4'-phosphopantetheine + adenosine 3',5'-bisphosphate + 2 H(+). The catalysed reaction is (9Z,12Z)-octadecadienoyl-CoA + H2O = S-(9Z,12Z-octadecadienoyl)-4'-phosphopantetheine + adenosine 3',5'-bisphosphate + 2 H(+). It carries out the reaction (9Z)-hexadecenoyl-CoA + H2O = S-(9Z-hexadecenoyl)-4'-phosphopantetheine + adenosine 3',5'-bisphosphate + 2 H(+). The enzyme catalyses (9Z)-tetradecenoyl-CoA + H2O = S-(9Z-tetradecenoyl)-4'-phosphopantetheine + adenosine 3',5'-bisphosphate + 2 H(+). It catalyses the reaction (6Z)-octenoyl-CoA + H2O = S-(6Z-octenoyl)-4'-phosphopantetheine + adenosine 3',5'-bisphosphate + 2 H(+). The catalysed reaction is hexadecanoyl-CoA + H2O = S-hexadecanoyl-4'-phosphopantetheine + adenosine 3',5'-bisphosphate + 2 H(+). It carries out the reaction tetradecanoyl-CoA + H2O = tetradecanoyl-4'-phosphopantetheine + adenosine 3',5'-bisphosphate + 2 H(+). The enzyme catalyses dodecanoyl-CoA + H2O = S-dodecanoyl-4'-phosphopantetheine + adenosine 3',5'-bisphosphate + 2 H(+). It catalyses the reaction a 5'-end CoA-ribonucleoside in mRNA + H2O = a 5'-end phospho-adenosine-phospho-ribonucleoside in mRNA + (R)-4'-phosphopantetheine + 2 H(+). Functionally, fatty acyl-coenzyme A (CoA) diphosphatase that hydrolyzes fatty acyl-CoA to yield acyl-4'-phosphopantetheine and adenosine 3',5'-bisphosphate. Mediates the hydrolysis of a wide range of CoA esters, including choloyl-CoA and branched-chain fatty-acyl-CoA esters and at low substrate concentrations medium and long-chain fatty-acyl-CoA esters are the primary substrates. Highest activity seen with medium-chain acyl-CoA esters and higher rates of activity seen with the unsaturated acyl-CoA esters compared with the saturated esters. Exhibits decapping activity towards dpCoA-capped RNAs in vitro. The chain is Acyl-coenzyme A diphosphatase NUDT19 (Nudt19) from Rattus norvegicus (Rat).